We begin with the raw amino-acid sequence, 140 residues long: Ergosterol biosynthetic protein 28 homolog (140 aa).

4 helical membrane passes run 4–24 (FLNVLRSWLVMVSIIAMGNTL), 52–72 (TFGIWTLLSSVIRCLCAIDIH), 79–99 (ITLWTFLLALGHFLSELFVYG), and 105–125 (IGVLAPLMVASFSILGMLVGL).

It belongs to the ERG28 family. As to expression, ubiquitous; strongly expressed in testis and some cancer cell lines.

The protein resides in the endoplasmic reticulum membrane. The protein is Ergosterol biosynthetic protein 28 homolog of Homo sapiens (Human).